Consider the following 138-residue polypeptide: Small ribosomal subunit protein uS11c (138 aa).

Positions 1 to 24 are disordered; the sequence is MAKSPPRSGSRRPGRIGSRKSGRR. A compositionally biased stretch (basic residues) spans 9 to 24; sequence GSRRPGRIGSRKSGRR.

This sequence belongs to the universal ribosomal protein uS11 family. Part of the 30S ribosomal subunit.

Its subcellular location is the plastid. It localises to the chloroplast. This Citrus sinensis (Sweet orange) protein is Small ribosomal subunit protein uS11c.